The following is a 202-amino-acid chain: Ribosomal RNA small subunit methyltransferase G (202 aa).

S-adenosyl-L-methionine-binding positions include Gly75, Phe80, 125 to 126 (VQ), and Arg139.

The protein belongs to the methyltransferase superfamily. RNA methyltransferase RsmG family.

The protein resides in the cytoplasm. Its function is as follows. Specifically methylates the N7 position of a guanine in 16S rRNA. This Mesomycoplasma hyopneumoniae (strain 7448) (Mycoplasma hyopneumoniae) protein is Ribosomal RNA small subunit methyltransferase G.